A 398-amino-acid polypeptide reads, in one-letter code: Phosphoglycerate kinase (398 aa).

Substrate is bound by residues aspartate 21–asparagine 23, arginine 36, histidine 59–arginine 62, arginine 119, and arginine 157. ATP is bound by residues lysine 208, glycine 296, glutamate 327, and glycine 354–serine 357.

Belongs to the phosphoglycerate kinase family. As to quaternary structure, monomer.

The protein resides in the cytoplasm. It carries out the reaction (2R)-3-phosphoglycerate + ATP = (2R)-3-phospho-glyceroyl phosphate + ADP. It functions in the pathway carbohydrate degradation; glycolysis; pyruvate from D-glyceraldehyde 3-phosphate: step 2/5. In Streptococcus pyogenes serotype M5 (strain Manfredo), this protein is Phosphoglycerate kinase.